The primary structure comprises 309 residues: UPF0282 protein Saci_0277 (309 aa).

The protein belongs to the UPF0282 family.

This is UPF0282 protein Saci_0277 from Sulfolobus acidocaldarius (strain ATCC 33909 / DSM 639 / JCM 8929 / NBRC 15157 / NCIMB 11770).